Here is a 344-residue protein sequence, read N- to C-terminus: Autoinducer 2 import system permease protein LsrC (344 aa).

The next 9 membrane-spanning stretches (helical) occupy residues 13 to 33 (FFAI…YFIL), 38 to 58 (MIFA…LVML), 69 to 89 (TVGL…GLAT), 90 to 110 (AIAF…LLVV), 114 to 134 (IPAI…MLLW), 155 to 175 (FIGV…GGWL), 212 to 232 (LNGM…GFVP), 251 to 271 (GISL…AFFL), and 283 to 303 (LPAW…LVLD). The interval 323-344 (QPGNKGSKQVARFPERKSKEVA) is disordered. Over residues 335 to 344 (FPERKSKEVA) the composition is skewed to basic and acidic residues.

Belongs to the binding-protein-dependent transport system permease family. AraH/RbsC subfamily. In terms of assembly, the complex is composed of two ATP-binding proteins (LsrA), two transmembrane proteins (LsrC and LsrD) and a solute-binding protein (LsrB).

The protein resides in the cell inner membrane. Its function is as follows. Part of the ABC transporter complex LsrABCD involved in autoinducer 2 (AI-2) import. Probably responsible for the translocation of the substrate across the membrane. In Klebsiella pneumoniae subsp. pneumoniae (strain ATCC 700721 / MGH 78578), this protein is Autoinducer 2 import system permease protein LsrC (lsrC).